A 236-amino-acid chain; its full sequence is CO-responsive transcriptional regulator RcoM (236 aa).

The 64-residue stretch at 1–64 (MDDFAYNLRR…PLRPKVAVLL (64 aa)) folds into the PAS domain. Residue histidine 52 participates in heme binding. The region spanning 131 to 236 (VPLGLGETTE…VTRLRGLLAI (106 aa)) is the HTH LytTR-type domain.

Heme is required as a cofactor.

Its function is as follows. Activates the expression of the CowN protein in response to carbon monoxide (CO). Is required to sustain N(2)-dependent growth in the presence of low levels of carbon monoxide (CO). The polypeptide is CO-responsive transcriptional regulator RcoM (rcoM) (Rhodospirillum rubrum (strain ATCC 11170 / ATH 1.1.1 / DSM 467 / LMG 4362 / NCIMB 8255 / S1)).